Consider the following 391-residue polypeptide: Multidrug resistance protein MdtL (391 aa).

A run of 12 helical transmembrane segments spans residues F4–V24, I42–A62, P69–E89, L93–F113, L131–M151, S158–L178, F203–V222, A245–F265, T269–P289, V293–M313, L331–I351, and M356–A376.

Belongs to the major facilitator superfamily. DHA1 family. MdtL (TC 2.A.1.2.22) subfamily.

It localises to the cell inner membrane. In terms of biological role, confers resistance to chloramphenicol. The polypeptide is Multidrug resistance protein MdtL (Escherichia coli O127:H6 (strain E2348/69 / EPEC)).